We begin with the raw amino-acid sequence, 667 residues long: Endogenous retrovirus group K member 5 Gag polyprotein (667 aa).

Residue Gly-2 is the site of N-myristoyl glycine attachment. The disordered stretch occupies residues 166–188; that stretch reads KGPELVGPSESKPRGPSPLPAGQ. 2 consecutive CCHC-type zinc fingers follow at residues 543-560 and 580-597; these read KKCY…SCPV and GLCP…QCHS. The tract at residues 598–667 is disordered; that stretch reads KFDKDGQPLS…CPAPQQAAPQ (70 aa). Residues 648 to 667 are compositionally biased toward polar residues; the sequence is GVSQLQQSNSCPAPQQAAPQ.

The protein belongs to the beta type-B retroviral Gag protein family. HERV class-II K(HML-2) gag subfamily. Myristoylation is essential for retroviral assembly. Alteration of the glycine residue leads to a block in the budding of particles and an accumulation of Gag inside the cell. In terms of processing, specific enzymatic cleavages may yield mature proteins.

It localises to the cell membrane. The products of the Gag polyproteins of infectious retroviruses perform highly complex orchestrated tasks during the assembly, budding, maturation, and infection stages of the viral replication cycle. During viral assembly, the proteins form membrane associations and self-associations that ultimately result in budding of an immature virion from the infected cell. Gag precursors also function during viral assembly to selectively bind and package two plus strands of genomic RNA. Endogenous Gag proteins may have kept, lost or modified their original function during evolution. The polypeptide is Endogenous retrovirus group K member 5 Gag polyprotein (ERVK-5) (Homo sapiens (Human)).